Consider the following 103-residue polypeptide: Small ribosomal subunit protein uS10 (103 aa).

Belongs to the universal ribosomal protein uS10 family. As to quaternary structure, part of the 30S ribosomal subunit.

Its function is as follows. Involved in the binding of tRNA to the ribosomes. This is Small ribosomal subunit protein uS10 from Natranaerobius thermophilus (strain ATCC BAA-1301 / DSM 18059 / JW/NM-WN-LF).